Here is a 617-residue protein sequence, read N- to C-terminus: Dihydroxy-acid dehydratase (617 aa).

Residue D82 coordinates Mg(2+). C123 is a binding site for [2Fe-2S] cluster. Residues D124 and K125 each coordinate Mg(2+). Residue K125 is modified to N6-carboxylysine. C197 lines the [2Fe-2S] cluster pocket. E497 contributes to the Mg(2+) binding site. S523 functions as the Proton acceptor in the catalytic mechanism.

Belongs to the IlvD/Edd family. As to quaternary structure, homodimer. [2Fe-2S] cluster serves as cofactor. It depends on Mg(2+) as a cofactor.

The catalysed reaction is (2R)-2,3-dihydroxy-3-methylbutanoate = 3-methyl-2-oxobutanoate + H2O. It catalyses the reaction (2R,3R)-2,3-dihydroxy-3-methylpentanoate = (S)-3-methyl-2-oxopentanoate + H2O. The protein operates within amino-acid biosynthesis; L-isoleucine biosynthesis; L-isoleucine from 2-oxobutanoate: step 3/4. It participates in amino-acid biosynthesis; L-valine biosynthesis; L-valine from pyruvate: step 3/4. In terms of biological role, functions in the biosynthesis of branched-chain amino acids. Catalyzes the dehydration of (2R,3R)-2,3-dihydroxy-3-methylpentanoate (2,3-dihydroxy-3-methylvalerate) into 2-oxo-3-methylpentanoate (2-oxo-3-methylvalerate) and of (2R)-2,3-dihydroxy-3-methylbutanoate (2,3-dihydroxyisovalerate) into 2-oxo-3-methylbutanoate (2-oxoisovalerate), the penultimate precursor to L-isoleucine and L-valine, respectively. The protein is Dihydroxy-acid dehydratase of Streptomyces avermitilis (strain ATCC 31267 / DSM 46492 / JCM 5070 / NBRC 14893 / NCIMB 12804 / NRRL 8165 / MA-4680).